A 262-amino-acid polypeptide reads, in one-letter code: Ribonuclease 3 (262 aa).

The region spanning 18-141 is the RNase III domain; sequence LATFLKNLDI…LVGAIYEDMG (124 aa). E59 is a Mg(2+) binding site. Residue D63 is part of the active site. Positions 127 and 130 each coordinate Mg(2+). E130 is a catalytic residue.

It belongs to the ribonuclease III family. Homodimer. Mg(2+) is required as a cofactor.

It localises to the cytoplasm. The catalysed reaction is Endonucleolytic cleavage to 5'-phosphomonoester.. Its function is as follows. Digests double-stranded RNA. Involved in the processing of primary rRNA transcript to yield the immediate precursors to the large and small rRNAs (23S and 16S). Processes some mRNAs, and tRNAs when they are encoded in the rRNA operon. Processes pre-crRNA and tracrRNA of type II CRISPR loci if present in the organism. The protein is Ribonuclease 3 of Mycoplasma genitalium (strain ATCC 33530 / DSM 19775 / NCTC 10195 / G37) (Mycoplasmoides genitalium).